We begin with the raw amino-acid sequence, 122 residues long: Fluoride-specific ion channel FluC (122 aa).

A run of 4 helical transmembrane segments spans residues 6 to 26 (LVVGFGGFIGAILRMLSINLV), 33 to 53 (SISFGTLFVNVLGSFIIGLLF), 60 to 80 (GLSPLLKSFISTGFLGAFTTF), and 101 to 121 (LNIILNVFLCLFAAWLGFLIF). Na(+) is bound by residues G75 and T78.

Belongs to the fluoride channel Fluc/FEX (TC 1.A.43) family.

It localises to the cell inner membrane. The enzyme catalyses fluoride(in) = fluoride(out). Its activity is regulated as follows. Na(+) is not transported, but it plays an essential structural role and its presence is essential for fluoride channel function. Functionally, fluoride-specific ion channel. Important for reducing fluoride concentration in the cell, thus reducing its toxicity. The sequence is that of Fluoride-specific ion channel FluC from Campylobacter jejuni subsp. jejuni serotype O:2 (strain ATCC 700819 / NCTC 11168).